A 918-amino-acid chain; its full sequence is E3 ubiquitin-protein ligase CBL-B-A (918 aa).

Residues 1 to 18 (MASGSGSSSSTSSSALSG) show a composition bias toward low complexity. Positions 1–27 (MASGSGSSSSTSSSALSGRLPGSRSAN) are disordered. Residues 46–178 (PPKQAAADRR…KAIFPSGQFQ (133 aa)) form a 4H region. The Cbl-PTB domain maps to 46-354 (PPKQAAADRR…GRSYNPDLTG (309 aa)). An EF-hand-like region spans residues 179-251 (GDNFRITKAD…FEFDIFTRLF (73 aa)). Ca(2+)-binding residues include Asp232, Thr234, Asn236, Tyr238, and Glu243. The tract at residues 252 to 354 (QPWGSILRNW…GRSYNPDLTG (103 aa)) is SH2-like. Residue Arg297 participates in 4-O-phospho-L-tyrosine binding. The segment at 355–383 (LCEPTPHDHIKVTQEQYELYCEMGSTFQL) is linker. An RING-type zinc finger spans residues 384 to 423 (CKICAENDKDVKIEPCGHLMCTSCLTSWQESDGQGCPFCR). 3 disordered regions span residues 481–582 (NERQ…RTCR), 780–831 (FPPA…PPAR), and 857–918 (HSDP…MRPT). Residues 483 to 497 (RQNSPVTSPGSSPLS) show a composition bias toward polar residues. Pro residues-rich tracts occupy residues 554–576 (LPAP…PIPP) and 821–830 (PSQPPPPPPA). Polar residues predominate over residues 898–918 (KASNTKGELLLPNQNLIMRPT).

In terms of assembly, interacts with several SH3 domain-containing proteins and with poly-ubiquitinated proteins.

The protein resides in the cytoplasm. It catalyses the reaction S-ubiquitinyl-[E2 ubiquitin-conjugating enzyme]-L-cysteine + [acceptor protein]-L-lysine = [E2 ubiquitin-conjugating enzyme]-L-cysteine + N(6)-ubiquitinyl-[acceptor protein]-L-lysine.. Its pathway is protein modification; protein ubiquitination. Its function is as follows. E3 ubiquitin-protein ligase which accepts ubiquitin from specific E2 ubiquitin-conjugating enzymes, and transfers it to substrates, generally promoting their degradation by the proteasome. The chain is E3 ubiquitin-protein ligase CBL-B-A (cblb-a) from Xenopus laevis (African clawed frog).